The chain runs to 270 residues: Cytosolic Fe-S cluster assembly factor NUBP2 homolog (270 aa).

21–28 contacts ATP; it reads GKGGVGKS. [4Fe-4S] cluster is bound by residues cysteine 195 and cysteine 198.

This sequence belongs to the Mrp/NBP35 ATP-binding proteins family. NUBP2/CFD1 subfamily. As to quaternary structure, heterotetramer of 2 NUBP1 and 2 NUBP2 chains. It depends on [4Fe-4S] cluster as a cofactor.

The protein resides in the cytoplasm. Its function is as follows. Component of the cytosolic iron-sulfur (Fe/S) protein assembly (CIA) machinery. Required for maturation of extramitochondrial Fe-S proteins. The NUBP1-NUBP2 heterotetramer forms a Fe-S scaffold complex, mediating the de novo assembly of an Fe-S cluster and its transfer to target apoproteins. This is Cytosolic Fe-S cluster assembly factor NUBP2 homolog from Nematostella vectensis (Starlet sea anemone).